The sequence spans 457 residues: Siroheme synthase (457 aa).

The segment at 1–204 (MDHLPIFCQL…NDQKAITETT (204 aa)) is precorrin-2 dehydrogenase /sirohydrochlorin ferrochelatase. NAD(+) contacts are provided by residues 22-23 (DV) and 43-44 (LA). At Ser128 the chain carries Phosphoserine. A uroporphyrinogen-III C-methyltransferase region spans residues 216–457 (GEVVLVGAGP…RDKLNWFSNH (242 aa)). Pro225 lines the S-adenosyl-L-methionine pocket. The active-site Proton acceptor is the Asp248. The active-site Proton donor is Lys270. Residues 301–303 (GGD), Ile306, 331–332 (TA), Met382, and Gly411 each bind S-adenosyl-L-methionine.

This sequence in the N-terminal section; belongs to the precorrin-2 dehydrogenase / sirohydrochlorin ferrochelatase family. The protein in the C-terminal section; belongs to the precorrin methyltransferase family.

The enzyme catalyses uroporphyrinogen III + 2 S-adenosyl-L-methionine = precorrin-2 + 2 S-adenosyl-L-homocysteine + H(+). The catalysed reaction is precorrin-2 + NAD(+) = sirohydrochlorin + NADH + 2 H(+). It catalyses the reaction siroheme + 2 H(+) = sirohydrochlorin + Fe(2+). The protein operates within cofactor biosynthesis; adenosylcobalamin biosynthesis; precorrin-2 from uroporphyrinogen III: step 1/1. It functions in the pathway cofactor biosynthesis; adenosylcobalamin biosynthesis; sirohydrochlorin from precorrin-2: step 1/1. It participates in porphyrin-containing compound metabolism; siroheme biosynthesis; precorrin-2 from uroporphyrinogen III: step 1/1. Its pathway is porphyrin-containing compound metabolism; siroheme biosynthesis; siroheme from sirohydrochlorin: step 1/1. The protein operates within porphyrin-containing compound metabolism; siroheme biosynthesis; sirohydrochlorin from precorrin-2: step 1/1. In terms of biological role, multifunctional enzyme that catalyzes the SAM-dependent methylations of uroporphyrinogen III at position C-2 and C-7 to form precorrin-2 via precorrin-1. Then it catalyzes the NAD-dependent ring dehydrogenation of precorrin-2 to yield sirohydrochlorin. Finally, it catalyzes the ferrochelation of sirohydrochlorin to yield siroheme. The sequence is that of Siroheme synthase from Escherichia coli O7:K1 (strain IAI39 / ExPEC).